We begin with the raw amino-acid sequence, 106 residues long: uncharacterized protein (106 aa).

Belongs to the csb family.

This is an uncharacterized protein from Dictyostelium discoideum (Social amoeba).